Here is a 549-residue protein sequence, read N- to C-terminus: MEVGIDFGTTFSTICFSPSGVSGCTPVAGSVYVETQIFIPEGSSTYLIGKAAGKAYRDGVEGRLYVNPKRWAGVTRDNVERYVEKLKPTYTVKIDSGGALLIGGLGSGPDTLLRVVDVICLFLRALILECERYTSTTVTAAVVTVPADYNSFKRSFVVEALKGLGIPVRGVVNEPTAAALYSLAKSRVEDLLLAVFDFGGGTFDVSFVKKKGNILCVIFSVGDNFLGGRDIDRAIVEVIKQKIKGKASDAKLGIFVSSMKEDLSNNNAITQHLIPVEGGVEVVDLTSDELDAIVAPFSARAVEVFKTGLDNFYPDPVIAVMTGGSSALVKVRSDVANLPQISKVVFDSTDFRCSVACGAKVYCDTLAGNSGLRLVDTLTNTLTDEVVGLQPVVIFPKGSPIPCSYTHRYTVGGGDVVYGIFEGENNRAFLNEPTFRGVSKRRGDPVETDVAQFNLSTDGTVSVIVNGEEVKNEYLVPGTTNVLDSLVYKSGREDLEAKAIPEYLTTLNILHDKAFTRRNLGNKDKGFSDLRIEENFLKSAVDTDTILNG.

The protein belongs to the heat shock protein 70 family.

It is found in the virion. In terms of biological role, transports viral genome to neighboring plant cells directly through plasmosdesmata, without any budding. The movement protein allows efficient cell to cell propagation, by bypassing the host cell wall barrier. Two movement proteins, p6, Hsp70h and three structural proteins, CP, CPm, and P64 are essential for cell-cell movement. Also plays a role in virion formation. Together with CPm and p64, encapsidates the 5'-terminal portion of the viral genome. This chain is Movement protein Hsp70h, found in Vitis vinifera (Grape).